The following is a 205-amino-acid chain: uncharacterized protein (205 aa).

The next 5 membrane-spanning stretches (helical) occupy residues valine 5–valine 25, glycine 41–isoleucine 61, serine 68–isoleucine 88, leucine 117–isoleucine 137, and phenylalanine 147–alanine 167.

This sequence belongs to the Rht family.

The protein resides in the cell inner membrane. Involved in positive regulation of motility and negative regulation of biofilm formation. This is an uncharacterized protein from Vibrio cholerae serotype O1 (strain ATCC 39315 / El Tor Inaba N16961).